The chain runs to 1342 residues: DNA-directed RNA polymerase subunit beta (1342 aa).

It belongs to the RNA polymerase beta chain family. In terms of assembly, the RNAP catalytic core consists of 2 alpha, 1 beta, 1 beta' and 1 omega subunit. When a sigma factor is associated with the core the holoenzyme is formed, which can initiate transcription.

It catalyses the reaction RNA(n) + a ribonucleoside 5'-triphosphate = RNA(n+1) + diphosphate. Its function is as follows. DNA-dependent RNA polymerase catalyzes the transcription of DNA into RNA using the four ribonucleoside triphosphates as substrates. The chain is DNA-directed RNA polymerase subunit beta from Wigglesworthia glossinidia brevipalpis.